Consider the following 253-residue polypeptide: HTH-type transcriptional regulator YdeO (253 aa).

The 97-residue stretch at 137-233 (GKVRNIVNMK…GNSPKRVSKE (97 aa)) folds into the HTH araC/xylS-type domain. 2 DNA-binding regions (H-T-H motif) span residues 154 to 175 (KDIC…KQEQ) and 200 to 223 (VNKI…RKHF).

Induces the expression of gadE and mdtEF. Could also regulate the expression of other genes involved in acid resistance. The chain is HTH-type transcriptional regulator YdeO (ydeO) from Escherichia coli O6:H1 (strain CFT073 / ATCC 700928 / UPEC).